We begin with the raw amino-acid sequence, 479 residues long: Ribosomal lysine N-methyltransferase 2 (479 aa).

One can recognise an SET domain in the interval 22-325 (PNISICESPE…INEELFLNYG (304 aa)). Tyr-324 contributes to the S-adenosyl-L-methionine binding site.

The protein belongs to the class V-like SAM-binding methyltransferase superfamily. RKM2 family.

Its function is as follows. S-adenosyl-L-methionine-dependent protein-lysine N-methyltransferase that trimethylates 60S ribosomal protein L12 (RPL12A and RPL12B) at 'Lys-4' and 'Lys-11'. In Saccharomyces cerevisiae (strain ATCC 204508 / S288c) (Baker's yeast), this protein is Ribosomal lysine N-methyltransferase 2.